The following is a 229-amino-acid chain: Translation initiation factor IF-3 (229 aa).

Disordered stretches follow at residues Met1 to Arg21 and Gln184 to Arg229. Over residues Ala192 to Gln203 the composition is skewed to low complexity. Pro residues predominate over residues Pro204–Glu221.

It belongs to the IF-3 family. As to quaternary structure, monomer.

The protein localises to the cytoplasm. In terms of biological role, IF-3 binds to the 30S ribosomal subunit and shifts the equilibrium between 70S ribosomes and their 50S and 30S subunits in favor of the free subunits, thus enhancing the availability of 30S subunits on which protein synthesis initiation begins. The polypeptide is Translation initiation factor IF-3 (Anaeromyxobacter sp. (strain Fw109-5)).